Consider the following 1493-residue polypeptide: Son of sevenless homolog (1493 aa).

Positions 244-448 (TYESVAVDFL…ERVVGCVSDM (205 aa)) constitute a DH domain. Residues 496–606 (ELEKDGDLGM…WMAVLVKVTT (111 aa)) form the PH domain. An N-terminal Ras-GEF domain is found at 656–824 (GIPVIKCGTV…TILALIEKRV (169 aa)). The 268-residue stretch at 897–1164 (HPIEIGRQLT…YNKSLEIQPK (268 aa)) folds into the Ras-GEF domain. 3 disordered regions span residues 1067-1091 (KSPP…DPEN), 1165-1248 (GLDT…DDAP), and 1263-1493 (HPKI…SSNK). Over residues 1079-1088 (QQKDDLKASD) the composition is skewed to basic and acidic residues. 2 stretches are compositionally biased toward polar residues: residues 1208 to 1231 (HSQN…NTPL) and 1279 to 1289 (SRANQSNSVSL). Low complexity predominate over residues 1308–1326 (STATSPTTLTTTTTPSSAG). The span at 1350-1361 (LTPSRDNSSPSA) shows a compositional bias: polar residues. Residues 1381-1400 (STSSDVSSSPSTSGSTSSAT) show a composition bias toward low complexity. Residues 1402-1417 (ENQEQLRVIFDREESH) are compositionally biased toward basic and acidic residues. Positions 1426 to 1435 (PLPPALPPPR) are enriched in pro residues. The span at 1453–1464 (HNSNSPTLSSEQ) shows a compositional bias: polar residues.

Interacts with cmd-1 in the presence of Ca(2+).

Functionally, promotes the exchange of Ras-bound GDP by GTP. May regulate signaling pathways downstream of receptor tyrosine kinase, egl-15 and let-23. Required for larval and male spicule development, fluid homeostasis, vulva induction, spermatogenesis, and oogenesis by promoting meiosis prophase exit during oocyte maturation. Required for the delamination of G1 cell by promoting the loss of cell junctions and detachment from the excretory system during larval development. Plays a role in nicotinic acetylcholine receptor (nAChR)-mediated sensitivity to nicotine. Regulates synaptic levels of nAchR subunit lev-1 in the nerve cord. The polypeptide is Son of sevenless homolog (Caenorhabditis elegans).